Consider the following 764-residue polypeptide: Molybdenum cofactor sulfurase 3 (764 aa).

Lys228 bears the N6-(pyridoxal phosphate)lysine mark. The active site involves Cys394. Residues 607-762 (LRLLKQSDEE…LYCNSVVEGL (156 aa)) form the MOSC domain.

The protein belongs to the class-V pyridoxal-phosphate-dependent aminotransferase family. MOCOS subfamily. Requires pyridoxal 5'-phosphate as cofactor.

It carries out the reaction Mo-molybdopterin + L-cysteine + AH2 = thio-Mo-molybdopterin + L-alanine + A + H2O. Its function is as follows. Sulfurates the molybdenum cofactor. Sulfation of molybdenum is essential for xanthine dehydrogenase (XDH) and aldehyde oxidase (ADO) enzymes in which molybdenum cofactor is liganded by 1 oxygen and 1 sulfur atom in active form. This is Molybdenum cofactor sulfurase 3 from Aedes aegypti (Yellowfever mosquito).